A 190-amino-acid chain; its full sequence is DNA-invertase hin (190 aa).

The Resolvase/invertase-type recombinase catalytic domain occupies 2 to 135; the sequence is ATIGYIRVST…AGLAAARAQG (134 aa). Residue Ser-10 is the O-(5'-phospho-DNA)-serine intermediate of the active site. The H-T-H motif DNA-binding region spans 162–181; that stretch reads RQQLAIIFGIGVSTLYRYFP.

This sequence belongs to the site-specific recombinase resolvase family.

Functionally, a DNA fragment of approximately 900 base pairs, adjacent to the fljB (H2) gene, which specifies the synthesis of phase-2 flagellin, can exist in either orientation with respect to fljB. The orientation of the inversion region controls expression of fljB. The hin gene occupies about two-thirds of the inversion region; it is required for the inversion of the fljB controlling region. The sequence is that of DNA-invertase hin (hin) from Salmonella typhimurium (strain LT2 / SGSC1412 / ATCC 700720).